The primary structure comprises 969 residues: MTTETLTTLEQHDRFLGRHIGPDSEQRQEMLNYVGAESLEDLTTQIVPESIRLNRDLAVGDNVSEAEGLAYIRQIADKNKVFKSYIGMGYYGTEVPSVIQRNVLENPGWYTAYTPYQPEIAQGRLEAILNFQQLSMDLTGLDLASSSLLDEATAAAEAMALAKRVSKAKKANIFFVADDVFPQTLDVIKTRAECFGMEVVVGPAEEAVNYELFGALFQYTNRYGQITDFTELFTALHEKKAIISVAADIMSLVMLKSPGSMGADVVFGNSQRFGVPMGFGGPHAAFFVSRDAHKRSLPGRIIGVSQDTRGNRALRMAMQTREQHIRREKANSNICTAQVLLANMASFYAVFHGPQGLKVIAERIHRLTDILAAGLTAKGVELVNNTWFDTLSIKGLDAKAVQKRADAAGINLRVDSCSESDGSSDQVLGVSLAETTTRTDVTQLFDVILGEGHGLDVAALDAQVMADSTSVPAELVRQDAILTHPTFNRYHSETEMMRYIKRLENKDLALNHSMISLGSCTMKLNAATEMMPITWPEFGNMHPFCPQDQAQGYAQLLGELSEWLVDITGYDAVSLQPNSGAQGEYAGLLAIKQYHESRGDAHRNICLIPSSAHGTNPASAQLAGMKIVVTACDKAGNIDMEDLKAKAAEVADNLSCIMVTYPSTHGVYEETIGEICEVIHQHGGQVYLDGANMNAQVGLTSPGFIGADVSHLNLHKTFAIPHGGGGPGMGPIGVKKHLAPFLSGHSVVKHGLESDGNGAVSAAPYGSAGILPITWMYIKLLGKQGLRESTQVALLNANYMMKKLSEHYPVLYTGRNDRVAHECIIDLRPLKEASGVTEMDIAKRLNDYGFHAPTMSFPVAGTLMIEPTESESKVELDRFIEAMVSIRAEAARVESGEWPVDNNPLHNAPHTLADIMDPEFDSRPYSREVAVFPTAAVKQNKFWPTVNRIDDVYGDRNLFCACVPISDYE.

Position 716 is an N6-(pyridoxal phosphate)lysine (lysine 716).

The protein belongs to the GcvP family. As to quaternary structure, the glycine cleavage system is composed of four proteins: P, T, L and H. Pyridoxal 5'-phosphate is required as a cofactor.

The enzyme catalyses N(6)-[(R)-lipoyl]-L-lysyl-[glycine-cleavage complex H protein] + glycine + H(+) = N(6)-[(R)-S(8)-aminomethyldihydrolipoyl]-L-lysyl-[glycine-cleavage complex H protein] + CO2. The glycine cleavage system catalyzes the degradation of glycine. The P protein binds the alpha-amino group of glycine through its pyridoxal phosphate cofactor; CO(2) is released and the remaining methylamine moiety is then transferred to the lipoamide cofactor of the H protein. The sequence is that of Glycine dehydrogenase (decarboxylating) from Shewanella woodyi (strain ATCC 51908 / MS32).